Consider the following 871-residue polypeptide: Probable inorganic carbon transporter subunit DabA (871 aa).

Zn(2+) is bound by residues cysteine 396, aspartate 398, histidine 577, and cysteine 592.

This sequence belongs to the inorganic carbon transporter (TC 9.A.2) DabA family. In terms of assembly, forms a complex with DabB. The cofactor is Zn(2+).

Its subcellular location is the cell membrane. Its function is as follows. Part of an energy-coupled inorganic carbon pump. The sequence is that of Probable inorganic carbon transporter subunit DabA from Bacillus subtilis (strain 168).